We begin with the raw amino-acid sequence, 226 residues long: Transcriptional regulatory protein DpiA (226 aa).

The Response regulatory domain occupies 6–122 (TLLIVEDETP…RLGQTLTRFR (117 aa)). A 4-aspartylphosphate modification is found at Asp-57. The H-T-H motif DNA-binding region spans 180-199 (AETVAQALTISRTTARRYLE).

In terms of processing, phosphorylated and activated by DpiB.

It is found in the cytoplasm. Its function is as follows. Member of the two-component regulatory system DpiA/DpiB, which is essential for expression of citrate-specific fermentation genes and genes involved in plasmid inheritance. Could be involved in response to both the presence of citrate and external redox conditions. This is Transcriptional regulatory protein DpiA (dpiA) from Escherichia coli O157:H7.